A 281-amino-acid polypeptide reads, in one-letter code: Translation initiation factor IF3-4, chloroplastic (281 aa).

Residues 1–51 constitute a chloroplast transit peptide; the sequence is MAGITSTVGFNAILAGATKTVSHPVKSKLFGLRLCVPEFSIVSLSPYHHRR. 2 disordered regions span residues 63-86 and 253-281; these read GGGG…DDSL and KVQE…TQDI. Composition is skewed to basic and acidic residues over residues 70-79 and 253-270; these read PGDRRGRQKE and KVQE…DDKV.

The protein belongs to the IF-3 family. Monomer.

The protein localises to the plastid. Its subcellular location is the chloroplast. Functionally, chloroplast translation initiation factor that is essential for the coordination of leaf and chloroplast development. IF-3 binds to the 30S ribosomal subunit and shifts the equilibrium between 70S ribosomes and their 50S and 30S subunits in favor of the free subunits, thus enhancing the availability of 30S subunits on which protein synthesis initiation begins. This Arabidopsis thaliana (Mouse-ear cress) protein is Translation initiation factor IF3-4, chloroplastic.